Reading from the N-terminus, the 466-residue chain is Nuclear pore complex protein Nup50 (466 aa).

The segment covering 1 to 14 (MAKRVAEKELTDRN) has biased composition (basic and acidic residues). The interval 1 to 22 (MAKRVAEKELTDRNWDEEDEVE) is disordered. Lys-8 is modified (N6-acetyllysine). The residue at position 52 (Ser-52) is a Phosphoserine. Residues 76 to 77 (FG) form repeat 1. Residues 76-302 (FGGSGGKPLE…FSAGSSSLFG (227 aa)) are 5 X 2 AA repeats of F-G. Lys-82 bears the N6-acetyllysine mark. Residues 112–113 (FG) form repeat 2. Position 126 is an N6-acetyllysine (Lys-126). 2 disordered regions span residues 128-150 (ISSPKCNNSNQPPSSGPASSTAC) and 200-257 (LENG…AEKK). The segment covering 131–150 (PKCNNSNQPPSSGPASSTAC) has biased composition (polar residues). Residues 143 to 205 (GPASSTACPG…IEKQLENGGG (63 aa)) are binding to CDKN1B. Position 208 is a phosphoserine (Ser-208). The stretch at 225–226 (FG) is repeat 3. Residues 225–235 (FGSTKLQQESP) are compositionally biased toward polar residues. The residue at position 234 (Ser-234) is a Phosphoserine. The span at 241–257 (NKAEDTSEKVEFTAEKK) shows a compositional bias: basic and acidic residues. The residue at position 246 (Thr-246) is a Phosphothreonine. Ser-268 carries the phosphoserine modification. Repeat unit 4 spans residues 271–272 (FG). Ser-294 bears the Phosphoserine mark. Repeat unit 5 spans residues 301–302 (FG). Residues 316 to 343 (SAKASESPAGGGSSECRDGEEEENDEPP) form a disordered region. In terms of domain architecture, RanBD1 spans 333 to 466 (DGEEEENDEP…HKILLEKKDA (134 aa)). Lys-351 participates in a covalent cross-link: Glycyl lysine isopeptide (Lys-Gly) (interchain with G-Cter in SUMO2). Lys-448 is subject to N6-acetyllysine.

Does not interact with TPR. Interacts with Importin alpha-2, Importin beta, Importin beta-2, NUP153, Ran binding protein 7, CDKN1B and itself. In terms of tissue distribution, widely expressed at low levels. Highest in the developing neural tube and adult testes.

It localises to the nucleus. The protein localises to the nuclear pore complex. Its subcellular location is the nucleus membrane. Its function is as follows. Component of the nuclear pore complex that has a direct role in nuclear protein import. Actively displaces NLSs from importin-alpha, and facilitates disassembly of the importin-alpha:beta-cargo complex and importin recycling. Interacts with regulatory proteins of cell cycle progression including CDKN1B. This interaction is required for correct intracellular transport and degradation of CDKN1B. The protein is Nuclear pore complex protein Nup50 (Nup50) of Mus musculus (Mouse).